The sequence spans 428 residues: Glutamate-1-semialdehyde 2,1-aminomutase (428 aa).

Lys265 carries the post-translational modification N6-(pyridoxal phosphate)lysine.

The protein belongs to the class-III pyridoxal-phosphate-dependent aminotransferase family. HemL subfamily. As to quaternary structure, homodimer. Requires pyridoxal 5'-phosphate as cofactor.

The protein resides in the cytoplasm. It carries out the reaction (S)-4-amino-5-oxopentanoate = 5-aminolevulinate. It participates in porphyrin-containing compound metabolism; protoporphyrin-IX biosynthesis; 5-aminolevulinate from L-glutamyl-tRNA(Glu): step 2/2. This Ruthia magnifica subsp. Calyptogena magnifica protein is Glutamate-1-semialdehyde 2,1-aminomutase.